The following is a 506-amino-acid chain: Vinckepain-1 (506 aa).

The Cytoplasmic segment spans residues 1 to 32 (MSDNIGQINFTIPGIQSLDENDTYLKINHKKT). Residues 1–262 (MSDNIGQINF…LISVDNKSKD (262 aa)) constitute a propeptide, activation peptide. Residues 33–53 (IKICAYAITAIALFFIGGVFF) traverse the membrane as a helical; Signal-anchor for type II membrane protein segment. Residues 54 to 506 (KNQAKINALD…VGSDVFFPIY (453 aa)) lie on the Lumenal side of the membrane. 2 N-linked (GlcNAc...) asparagine glycosylation sites follow: asparagine 133 and asparagine 258. 4 disulfide bridges follow: cysteine 284-cysteine 326, cysteine 319-cysteine 359, cysteine 344-cysteine 364, and cysteine 413-cysteine 495. Cysteine 287 is a catalytic residue. N-linked (GlcNAc...) asparagine glycosylation is present at asparagine 418. Residues histidine 419 and asparagine 470 contribute to the active site.

This sequence belongs to the peptidase C1 family.

It localises to the membrane. Cysteine protease. In Plasmodium vinckei, this protein is Vinckepain-1.